We begin with the raw amino-acid sequence, 692 residues long: DNA ligase (692 aa).

NAD(+)-binding positions include 40-44 (DAAYD), 89-90 (SL), and Glu-121. The N6-AMP-lysine intermediate role is filled by Lys-123. Arg-144, Glu-181, Lys-297, and Lys-321 together coordinate NAD(+). The Zn(2+) site is built by Cys-415, Cys-417, Cys-439, and Cys-445. Residues 614 to 692 (KTDTAVAGKT…EDEWLEMVGS (79 aa)) enclose the BRCT domain.

The protein belongs to the NAD-dependent DNA ligase family. LigA subfamily. Requires Mg(2+) as cofactor. It depends on Mn(2+) as a cofactor.

It carries out the reaction NAD(+) + (deoxyribonucleotide)n-3'-hydroxyl + 5'-phospho-(deoxyribonucleotide)m = (deoxyribonucleotide)n+m + AMP + beta-nicotinamide D-nucleotide.. Functionally, DNA ligase that catalyzes the formation of phosphodiester linkages between 5'-phosphoryl and 3'-hydroxyl groups in double-stranded DNA using NAD as a coenzyme and as the energy source for the reaction. It is essential for DNA replication and repair of damaged DNA. The protein is DNA ligase of Phenylobacterium zucineum (strain HLK1).